Consider the following 201-residue polypeptide: Holliday junction branch migration complex subunit RuvA (201 aa).

The tract at residues methionine 1–alanine 63 is domain I. The interval aspartate 64–glycine 142 is domain II. The tract at residues glycine 143–asparagine 153 is flexible linker. The domain III stretch occupies residues asparagine 153–leucine 201.

The protein belongs to the RuvA family. In terms of assembly, homotetramer. Forms an RuvA(8)-RuvB(12)-Holliday junction (HJ) complex. HJ DNA is sandwiched between 2 RuvA tetramers; dsDNA enters through RuvA and exits via RuvB. An RuvB hexamer assembles on each DNA strand where it exits the tetramer. Each RuvB hexamer is contacted by two RuvA subunits (via domain III) on 2 adjacent RuvB subunits; this complex drives branch migration. In the full resolvosome a probable DNA-RuvA(4)-RuvB(12)-RuvC(2) complex forms which resolves the HJ.

It localises to the cytoplasm. Its function is as follows. The RuvA-RuvB-RuvC complex processes Holliday junction (HJ) DNA during genetic recombination and DNA repair, while the RuvA-RuvB complex plays an important role in the rescue of blocked DNA replication forks via replication fork reversal (RFR). RuvA specifically binds to HJ cruciform DNA, conferring on it an open structure. The RuvB hexamer acts as an ATP-dependent pump, pulling dsDNA into and through the RuvAB complex. HJ branch migration allows RuvC to scan DNA until it finds its consensus sequence, where it cleaves and resolves the cruciform DNA. This chain is Holliday junction branch migration complex subunit RuvA, found in Bacteroides fragilis (strain ATCC 25285 / DSM 2151 / CCUG 4856 / JCM 11019 / LMG 10263 / NCTC 9343 / Onslow / VPI 2553 / EN-2).